A 364-amino-acid polypeptide reads, in one-letter code: GDSL esterase/lipase At1g29660 (364 aa).

The first 26 residues, 1–26 (MESYLRKWCLVSVWVLLLGLGFKVKA), serve as a signal peptide directing secretion. The active-site Nucleophile is the Ser39. Residues Asp328 and His331 each act as charge relay system in the active site.

The protein belongs to the 'GDSL' lipolytic enzyme family. In terms of tissue distribution, found in phloem exudates.

It is found in the secreted. Its subcellular location is the extracellular space. It localises to the apoplast. Its function is as follows. Involved in EDS1-dependent systemic acquired resistance, maybe in phloem-mediated long-distance signaling. In Arabidopsis thaliana (Mouse-ear cress), this protein is GDSL esterase/lipase At1g29660.